Reading from the N-terminus, the 180-residue chain is ATP-dependent protease subunit HslV (180 aa).

Residue Thr5 is part of the active site. Positions 165, 168, and 171 each coordinate Na(+).

Belongs to the peptidase T1B family. HslV subfamily. A double ring-shaped homohexamer of HslV is capped on each side by a ring-shaped HslU homohexamer. The assembly of the HslU/HslV complex is dependent on binding of ATP.

It is found in the cytoplasm. The enzyme catalyses ATP-dependent cleavage of peptide bonds with broad specificity.. With respect to regulation, allosterically activated by HslU binding. In terms of biological role, protease subunit of a proteasome-like degradation complex believed to be a general protein degrading machinery. In Helicobacter pylori (strain P12), this protein is ATP-dependent protease subunit HslV.